A 128-amino-acid polypeptide reads, in one-letter code: NHP2-like protein 1 (128 aa).

The segment at Arg-36–Arg-48 is interaction with U4 snRNA and U4atac snRNA. Positions Ser-96–Val-128 are important for U4 snRNA-binding.

This sequence belongs to the eukaryotic ribosomal protein eL8 family. Identified in the spliceosome B complex. Component of the U4/U6-U5 tri-snRNP complex. Part of the small subunit (SSU) processome, composed of more than 70 proteins and the RNA chaperone small nucleolar RNA (snoRNA) U3.

It localises to the nucleus. The protein resides in the nucleolus. Functionally, part of the small subunit (SSU) processome, first precursor of the small eukaryotic ribosomal subunit. During the assembly of the SSU processome in the nucleolus, many ribosome biogenesis factors, an RNA chaperone and ribosomal proteins associate with the nascent pre-rRNA and work in concert to generate RNA folding, modifications, rearrangements and cleavage as well as targeted degradation of pre-ribosomal RNA by the RNA exosome. Involved in pre-mRNA splicing as component of the spliceosome. Binds to the 5'-stem-loop of U4 snRNA and thereby contributes to spliceosome assembly. The protein undergoes a conformational change upon RNA-binding. Core component of box C/D small nucleolar ribonucleoprotein (snoRNP) complexes that function in methylation of multiple sites on ribosomal RNAs (rRNAs) and messenger RNAs (mRNAs). This chain is NHP2-like protein 1, found in Xenopus laevis (African clawed frog).